Consider the following 410-residue polypeptide: Arginine deiminase (410 aa).

Cys-399 serves as the catalytic Amidino-cysteine intermediate.

The protein belongs to the arginine deiminase family.

The protein resides in the cytoplasm. It catalyses the reaction L-arginine + H2O = L-citrulline + NH4(+). Its pathway is amino-acid degradation; L-arginine degradation via ADI pathway; carbamoyl phosphate from L-arginine: step 1/2. The sequence is that of Arginine deiminase from Listeria monocytogenes serotype 4b (strain F2365).